The chain runs to 197 residues: Peptidyl-tRNA hydrolase (197 aa).

Residue Tyr-23 coordinates tRNA. The Proton acceptor role is filled by His-28. TRNA-binding residues include Phe-73, Asn-75, and Asn-121.

It belongs to the PTH family. Monomer.

Its subcellular location is the cytoplasm. The catalysed reaction is an N-acyl-L-alpha-aminoacyl-tRNA + H2O = an N-acyl-L-amino acid + a tRNA + H(+). Hydrolyzes ribosome-free peptidyl-tRNAs (with 1 or more amino acids incorporated), which drop off the ribosome during protein synthesis, or as a result of ribosome stalling. Its function is as follows. Catalyzes the release of premature peptidyl moieties from peptidyl-tRNA molecules trapped in stalled 50S ribosomal subunits, and thus maintains levels of free tRNAs and 50S ribosomes. The chain is Peptidyl-tRNA hydrolase from Frankia casuarinae (strain DSM 45818 / CECT 9043 / HFP020203 / CcI3).